The following is a 103-amino-acid chain: Small ribosomal subunit protein uS10 (103 aa).

This sequence belongs to the universal ribosomal protein uS10 family. As to quaternary structure, part of the 30S ribosomal subunit.

In terms of biological role, involved in the binding of tRNA to the ribosomes. The chain is Small ribosomal subunit protein uS10 from Acidovorax sp. (strain JS42).